Here is a 416-residue protein sequence, read N- to C-terminus: Imidazolonepropionase (416 aa).

Fe(3+)-binding residues include His-78 and His-80. 2 residues coordinate Zn(2+): His-78 and His-80. 3 residues coordinate 4-imidazolone-5-propanoate: Arg-87, Tyr-150, and His-183. Tyr-150 contacts N-formimidoyl-L-glutamate. Fe(3+) is bound at residue His-248. His-248 lines the Zn(2+) pocket. Gln-251 is a 4-imidazolone-5-propanoate binding site. Asp-323 serves as a coordination point for Fe(3+). Asp-323 is a binding site for Zn(2+). The N-formimidoyl-L-glutamate site is built by Asn-325 and Gly-327. Thr-328 lines the 4-imidazolone-5-propanoate pocket.

The protein belongs to the metallo-dependent hydrolases superfamily. HutI family. Requires Zn(2+) as cofactor. Fe(3+) serves as cofactor.

The protein localises to the cytoplasm. It carries out the reaction 4-imidazolone-5-propanoate + H2O = N-formimidoyl-L-glutamate. Its pathway is amino-acid degradation; L-histidine degradation into L-glutamate; N-formimidoyl-L-glutamate from L-histidine: step 3/3. Functionally, catalyzes the hydrolytic cleavage of the carbon-nitrogen bond in imidazolone-5-propanoate to yield N-formimidoyl-L-glutamate. It is the third step in the universal histidine degradation pathway. The protein is Imidazolonepropionase of Vibrio campbellii (strain ATCC BAA-1116).